Reading from the N-terminus, the 496-residue chain is Cytochrome P450 71D180 (496 aa).

A helical; Signal-anchor for type II membrane protein membrane pass occupies residues 1 to 21 (MDISISWVVIIVFVLSYLILM). Cys-435 is a heme binding site. The tract at residues 471–496 (MSETPGLSGPRKNPLIMIPTIHNPTS) is disordered.

This sequence belongs to the cytochrome P450 family. Requires heme as cofactor.

It localises to the membrane. It carries out the reaction gamma-terpinene + 2 reduced [NADPH--hemoprotein reductase] + 2 O2 = carvacrol + 2 oxidized [NADPH--hemoprotein reductase] + 3 H2O + 2 H(+). It catalyses the reaction (4S)-limonene + reduced [NADPH--hemoprotein reductase] + O2 = (1S,5R)-carveol + oxidized [NADPH--hemoprotein reductase] + H2O + H(+). The enzyme catalyses (4R)-limonene + reduced [NADPH--hemoprotein reductase] + O2 = (1R,5S)-carveol + oxidized [NADPH--hemoprotein reductase] + H2O + H(+). It participates in secondary metabolite biosynthesis; terpenoid biosynthesis. Involved in the biosynthesis of phenolic monoterpenes natural products thymol and carvacrol which have a broad range of biological activities acting as antimicrobial compounds, insecticides, antioxidants and pharmaceutical agents. Catalyzes the C2-hydroxylation of gamma-terpinene to produce carvacrol. Mediates also the C6-hydroxylation of (4S)-limonene and (4R)-limonene to form carveol. The protein is Cytochrome P450 71D180 of Origanum majorana (Sweet marjoram).